We begin with the raw amino-acid sequence, 414 residues long: Diaminopimelate decarboxylase (414 aa).

Lys-52 is subject to N6-(pyridoxal phosphate)lysine. Pyridoxal 5'-phosphate is bound by residues Gly-231 and 265 to 268; that span reads EPGR. 3 residues coordinate substrate: Arg-268, Arg-304, and Tyr-308. The active-site Proton donor is Cys-334. Residues Glu-335 and Tyr-362 each coordinate substrate. Tyr-362 lines the pyridoxal 5'-phosphate pocket.

This sequence belongs to the Orn/Lys/Arg decarboxylase class-II family. LysA subfamily. As to quaternary structure, homodimer. The cofactor is pyridoxal 5'-phosphate.

It carries out the reaction meso-2,6-diaminopimelate + H(+) = L-lysine + CO2. Its pathway is amino-acid biosynthesis; L-lysine biosynthesis via DAP pathway; L-lysine from DL-2,6-diaminopimelate: step 1/1. Specifically catalyzes the decarboxylation of meso-diaminopimelate (meso-DAP) to L-lysine. This Neisseria meningitidis serogroup B (strain ATCC BAA-335 / MC58) protein is Diaminopimelate decarboxylase.